Consider the following 1572-residue polypeptide: Dynein axonemal assembly factor 8 (1572 aa).

Disordered stretches follow at residues M1–G21, S262–S304, S324–Q428, and F849–E871. Polar residues predominate over residues S324–R335. Over residues N336–G351 the composition is skewed to basic and acidic residues. Over residues N361–N374 the composition is skewed to polar residues. Positions V409–I426 are enriched in basic and acidic residues. Positions F849–R865 are enriched in polar residues. The interval T1249 to E1382 is NDK.

In terms of assembly, interacts with DNAI2. Expression is enriched in multiciliated cells in the epidermis and the nephrostomes of the pronephros.

The protein localises to the dynein axonemal particle. The protein resides in the cytoplasm. Functionally, in cyliated cells, dynein axonemal particle-specific protein required for deployment of ODA to the axoneme. Interacts with outer dynein arm (ODA) subunits. This is Dynein axonemal assembly factor 8 (dnaaf8) from Xenopus laevis (African clawed frog).